The primary structure comprises 533 residues: Amidophosphoribosyltransferase (533 aa).

Residue C2 is the Nucleophile of the active site. One can recognise a Glutamine amidotransferase type-2 domain in the interval 2 to 238 (CGILALMLAD…PGECVFIRRS (237 aa)). The Mg(2+) site is built by D383 and D384. S506 bears the Phosphoserine mark.

This sequence in the C-terminal section; belongs to the purine/pyrimidine phosphoribosyltransferase family. Mg(2+) is required as a cofactor.

It catalyses the reaction 5-phospho-beta-D-ribosylamine + L-glutamate + diphosphate = 5-phospho-alpha-D-ribose 1-diphosphate + L-glutamine + H2O. It functions in the pathway purine metabolism; IMP biosynthesis via de novo pathway; N(1)-(5-phospho-D-ribosyl)glycinamide from 5-phospho-alpha-D-ribose 1-diphosphate: step 1/2. The chain is Amidophosphoribosyltransferase (ade4) from Schizosaccharomyces pombe (strain 972 / ATCC 24843) (Fission yeast).